The chain runs to 378 residues: MVKPLRLNDRHQQILRATVQHYIATAEPVGSHTLAQEYQFAVSSATIRNALGQLEKAGLLYQPHVSAGRVPSDSGYRIYVDNLLTWSDRQSRTVKQRLENEINGDNWHFEALIQRMGQILAGLSGYIALITFPQTETVQLRHLQLMLLPSHQILIILVTDSYHTHSATLDLPAAMEAKEEGELEQELAIFSNFLNAQLRGKNLSELSHLNWQELDQKFSIYADFLKGLQQQIKPLLQRRMAGPLVVHGVSKVIQQPEFSQLEQVQMLLSLLEQEQDKLFSLLFDPDNYGDNLANLGQEMNLLTGETMPKTRPVVTIRIGAENPLESMHPCTLVSAIYRQQEIPMGSVSILGPTRMVYQQTIPLVEQAAECLSEALSKN.

The protein belongs to the HrcA family.

In terms of biological role, negative regulator of class I heat shock genes (grpE-dnaK-dnaJ and groELS operons). Prevents heat-shock induction of these operons. The chain is Heat-inducible transcription repressor HrcA from Synechocystis sp. (strain ATCC 27184 / PCC 6803 / Kazusa).